Consider the following 282-residue polypeptide: Tyrosine recombinase XerA (282 aa).

The Core-binding (CB) domain occupies 2–79 (SEPNEVIEEF…ALRAYFRFEG (78 aa)). The Tyr recombinase domain occupies 95-271 (SLPKALTREE…TVEHLRKAQE (177 aa)). Catalysis depends on residues Arg132, Lys157, His223, Arg226, and His249. Catalysis depends on Tyr258, which acts as the O-(3'-phospho-DNA)-tyrosine intermediate.

This sequence belongs to the 'phage' integrase family. XerA subfamily.

It localises to the cytoplasm. Site-specific tyrosine recombinase, which acts by catalyzing the cutting and rejoining of the recombining DNA molecules. The polypeptide is Tyrosine recombinase XerA (Thermococcus kodakarensis (strain ATCC BAA-918 / JCM 12380 / KOD1) (Pyrococcus kodakaraensis (strain KOD1))).